Reading from the N-terminus, the 124-residue chain is RNA polymerase-binding protein RbpA (124 aa).

4 residues coordinate Zn(2+): C34, H38, C56, and C59. The sufficient for interaction with HrdB (SigA) stretch occupies residues 73 to 124; the sequence is EKKAKPARTHWDMLMERRTREELEEVLEERLAVLRSGAMNIAVHPRDSRKSA.

Belongs to the RNA polymerase-binding protein RbpA family. Homodimer. Forms a complex with the RNAP, and a complex with RNAP plus principal sigma factor HrdB associated with promoter. Binds to free principal sigma factors HrdB and HrdA, probably via the sigma-2 domain, but not to 6 other sigma factors tested. Zn(2+) is required as a cofactor.

Binds to RNA polymerase (RNAP), stimulating transcription from principal, but not alternative sigma factor promoters. Stimulates transcription from several principal sigma factor HrdB (SigA)-dependent promoters but not from a SigR-dependent promoter. Stimulation occurs in the presence of the transcription initiation inhibitor rifampicin (Rif). The protein is RNA polymerase-binding protein RbpA of Streptomyces coelicolor (strain ATCC BAA-471 / A3(2) / M145).